Here is a 250-residue protein sequence, read N- to C-terminus: 5-oxoprolinase subunit A (250 aa).

Belongs to the LamB/PxpA family. In terms of assembly, forms a complex composed of PxpA, PxpB and PxpC.

The catalysed reaction is 5-oxo-L-proline + ATP + 2 H2O = L-glutamate + ADP + phosphate + H(+). Functionally, catalyzes the cleavage of 5-oxoproline to form L-glutamate coupled to the hydrolysis of ATP to ADP and inorganic phosphate. The protein is 5-oxoprolinase subunit A of Streptomyces coelicolor (strain ATCC BAA-471 / A3(2) / M145).